The chain runs to 186 residues: Putative transcriptional regulator encoded by LINC00473 (186 aa).

Positions 1–62 (MELSAAAGRR…RDCTPTCTNA (62 aa)) are disordered. The span at 18–40 (FTGRHRTERSQERGSTPRKERSM) shows a compositional bias: basic and acidic residues.

In terms of biological role, may play a role in cAMP-mediated gene transcription. In Homo sapiens (Human), this protein is Putative transcriptional regulator encoded by LINC00473 (LINC00473).